The primary structure comprises 85 residues: Oxytocin-neurophysin 1 (85 aa).

Glycine amide is present on Gly3. Disulfide bonds link Cys16–Cys60, Cys19–Cys33, Cys27–Cys50, Cys34–Cys40, Cys67–Cys79, and Cys80–Cys85.

Belongs to the vasopressin/oxytocin family. In terms of assembly, interacts with oxytocin receptor (Ki=1.5 nM). Interacts with vasopressin V1aR/AVPR1A (Ki=37 nM), V1bR/AVPR1B (Ki=222 nM), and V2R/AVPR2 receptors (Ki=823 nM).

Functionally, neurophysin 1 specifically binds oxytocin. In terms of biological role, oxytocin causes contraction of the smooth muscle of the uterus and of the mammary gland. Acts by binding to oxytocin receptor (OXTR). The sequence is that of Oxytocin-neurophysin 1 (OXT) from Papio hamadryas (Hamadryas baboon).